A 660-amino-acid polypeptide reads, in one-letter code: UvrABC system protein B (660 aa).

Residues 27–414 (NGVNEGKRHQ…TDEMVQQIIR (388 aa)) enclose the Helicase ATP-binding domain. 40–47 (GATGTGKT) contacts ATP. The Beta-hairpin motif lies at 93 to 116 (YYDYYQPEAYVPSTDTFIEKDASI). The Helicase C-terminal domain occupies 431–593 (QIDDLLGEIQ…ITPTTINKKI (163 aa)). Residues 603–622 (NDETNEQQQTEVPKKMTKKE) are disordered. The region spanning 624–659 (EKTIANIEKEMKQAAKDLDFEKATELRDMLFELKAE) is the UVR domain.

This sequence belongs to the UvrB family. Forms a heterotetramer with UvrA during the search for lesions. Interacts with UvrC in an incision complex.

It localises to the cytoplasm. Its function is as follows. The UvrABC repair system catalyzes the recognition and processing of DNA lesions. A damage recognition complex composed of 2 UvrA and 2 UvrB subunits scans DNA for abnormalities. Upon binding of the UvrA(2)B(2) complex to a putative damaged site, the DNA wraps around one UvrB monomer. DNA wrap is dependent on ATP binding by UvrB and probably causes local melting of the DNA helix, facilitating insertion of UvrB beta-hairpin between the DNA strands. Then UvrB probes one DNA strand for the presence of a lesion. If a lesion is found the UvrA subunits dissociate and the UvrB-DNA preincision complex is formed. This complex is subsequently bound by UvrC and the second UvrB is released. If no lesion is found, the DNA wraps around the other UvrB subunit that will check the other stand for damage. The chain is UvrABC system protein B from Staphylococcus saprophyticus subsp. saprophyticus (strain ATCC 15305 / DSM 20229 / NCIMB 8711 / NCTC 7292 / S-41).